The following is an 84-amino-acid chain: Small ribosomal subunit protein eS27w (84 aa).

Residues cysteine 39–cysteine 61 form a C4-type zinc finger.

It belongs to the eukaryotic ribosomal protein eS27 family. Zn(2+) is required as a cofactor.

This is Small ribosomal subunit protein eS27w (RPS27D) from Arabidopsis thaliana (Mouse-ear cress).